The following is a 292-amino-acid chain: Ubiquinone biosynthesis protein UbiV (292 aa).

Residues cysteine 39, cysteine 180, cysteine 193, and cysteine 197 each contribute to the [4Fe-4S] cluster site.

Belongs to the peptidase U32 family. UbiV subfamily. In terms of assembly, forms a heterodimer with UbiU. [4Fe-4S] cluster is required as a cofactor.

It functions in the pathway cofactor biosynthesis; ubiquinone biosynthesis. Required for O(2)-independent ubiquinone (coenzyme Q) biosynthesis. Together with UbiU, is essential for the C6-hydroxylation reaction in the oxygen-independent ubiquinone biosynthesis pathway. This is Ubiquinone biosynthesis protein UbiV from Escherichia coli (strain K12).